The sequence spans 424 residues: PtdIns3K complex I subunit atg38 (424 aa).

Residues 50–78 are a coiled coil; the sequence is LIKRCANNQIEELMVRIRELRESLPNKQT. The interval 73 to 212 is required for interaction with atg8; the sequence is LPNKQTPISM…DPAYQNTNEQ (140 aa). Positions 178 to 181 match the AIM motif; the sequence is FLIV. Positions 268-284 are enriched in basic and acidic residues; sequence LSEEEMGRSHKREESFK. A disordered region spans residues 268-299; it reads LSEEEMGRSHKREESFKRAFGHASSSESSIGE. The stretch at 390–420 forms a coiled coil; the sequence is TVDSQLKIKQLETQIATLQKQLEQFQTSTLD.

This sequence belongs to the ATG38 family. In terms of assembly, component of the autophagy-specific vps34 PI3-kinase complex I composed of vps15, atg6, pik3/vps34, atg14 and atg38. Interacts (via AIM motif) with atg8; the interaction is direct and leads to recruitment of the autophagy-specific vps34 PI3-kinase complex I to the phagophore assembly site.

The protein localises to the preautophagosomal structure membrane. The protein resides in the cytoplasm. Its subcellular location is the cytosol. Functionally, functions as a part of the autophagy-specific VPS34 PI3-kinase complex I that plays a role in autophagosome assembly. This complex is essential to recruit the atg8-phosphatidylinositol conjugate and the atg12-atg5 conjugate to the pre-autophagosomal structure. By binding to atg8 at the phagophore assembly site, atg38 helps establish a positive feedback loop for recruitment of phagophore assembly proteins, including atg8. The protein is PtdIns3K complex I subunit atg38 of Schizosaccharomyces pombe (strain 972 / ATCC 24843) (Fission yeast).